Here is a 276-residue protein sequence, read N- to C-terminus: NADPH-dependent 7-cyano-7-deazaguanine reductase (276 aa).

83 to 85 (IES) provides a ligand contact to substrate. Residue 85-86 (SK) coordinates NADPH. Cysteine 184 (thioimide intermediate) is an active-site residue. Catalysis depends on aspartate 191, which acts as the Proton donor. Substrate is bound at residue 223 to 224 (HE). An NADPH-binding site is contributed by 252-253 (RG).

The protein belongs to the GTP cyclohydrolase I family. QueF type 2 subfamily. In terms of assembly, homodimer.

Its subcellular location is the cytoplasm. The catalysed reaction is 7-aminomethyl-7-carbaguanine + 2 NADP(+) = 7-cyano-7-deazaguanine + 2 NADPH + 3 H(+). Its pathway is tRNA modification; tRNA-queuosine biosynthesis. Its function is as follows. Catalyzes the NADPH-dependent reduction of 7-cyano-7-deazaguanine (preQ0) to 7-aminomethyl-7-deazaguanine (preQ1). The chain is NADPH-dependent 7-cyano-7-deazaguanine reductase from Pseudomonas aeruginosa (strain ATCC 15692 / DSM 22644 / CIP 104116 / JCM 14847 / LMG 12228 / 1C / PRS 101 / PAO1).